Consider the following 152-residue polypeptide: Transcriptional regulator MraZ (152 aa).

SpoVT-AbrB domains are found at residues 7 to 51 (KERH…APDR) and 89 to 132 (LEMV…DPQR).

It belongs to the MraZ family. As to quaternary structure, forms oligomers.

The protein localises to the cytoplasm. It localises to the nucleoid. The protein is Transcriptional regulator MraZ of Pelodictyon phaeoclathratiforme (strain DSM 5477 / BU-1).